A 138-amino-acid chain; its full sequence is Small ribosomal subunit protein uS11c (138 aa).

Positions 1-21 (MTKAIQKIGSRRNGRIASRKN) are disordered. The span at 9–21 (GSRRNGRIASRKN) shows a compositional bias: basic residues.

Belongs to the universal ribosomal protein uS11 family. In terms of assembly, part of the 30S ribosomal subunit.

The protein resides in the plastid. It is found in the chloroplast. This chain is Small ribosomal subunit protein uS11c, found in Ceratophyllum demersum (Rigid hornwort).